The sequence spans 156 residues: Small ribosomal subunit protein uS7 (156 aa).

Belongs to the universal ribosomal protein uS7 family. In terms of assembly, part of the 30S ribosomal subunit. Contacts proteins S9 and S11.

One of the primary rRNA binding proteins, it binds directly to 16S rRNA where it nucleates assembly of the head domain of the 30S subunit. Is located at the subunit interface close to the decoding center, probably blocks exit of the E-site tRNA. This chain is Small ribosomal subunit protein uS7, found in Oleidesulfovibrio alaskensis (strain ATCC BAA-1058 / DSM 17464 / G20) (Desulfovibrio alaskensis).